Here is a 543-residue protein sequence, read N- to C-terminus: uncharacterized protein (543 aa).

One can recognise a TRAM domain in the interval 1–59 (MLKKNDIVEVEIVDLTHEGAGVAKVDGLVFFVENALPSEKILMRVLKVNKKIGFGKVEK). S-adenosyl-L-methionine-binding residues include Gln-283, Tyr-312, Glu-333, and Asp-381. Residue Cys-408 is the Nucleophile of the active site.

Belongs to the class I-like SAM-binding methyltransferase superfamily. RNA M5U methyltransferase family.

This is an uncharacterized protein from Streptococcus pneumoniae (strain ATCC BAA-255 / R6).